A 269-amino-acid polypeptide reads, in one-letter code: Phycobilisome 37.5 kDa linker polypeptide, phycocyanin-associated, rod (269 aa).

Residues 2-177 enclose the PBS-linker domain; that stretch reads TSSTAARQLG…IYRGYANSDR (176 aa). Residues 217 to 269 enclose the CpcD-like domain; that stretch reads GQLYRVRVIQADRGRTTQIRRSIQEYLVSYDQLSPTLQRLNQRGSRVVNISPA.

Belongs to the phycobilisome linker protein family.

It localises to the cellular thylakoid membrane. Its function is as follows. Rod linker protein, associated with phycocyanin. Linker polypeptides determine the state of aggregation and the location of the disk-shaped phycobiliprotein units within the phycobilisome and modulate their spectroscopic properties in order to mediate a directed and optimal energy transfer. In Microchaete diplosiphon (Fremyella diplosiphon), this protein is Phycobilisome 37.5 kDa linker polypeptide, phycocyanin-associated, rod (cpcH2).